The primary structure comprises 87 residues: U3-theraphotoxin-Hhn1a 6 (87 aa).

A signal peptide spans 1–24 (MVNMKASMFLTFAGLVLLFVVCYA). Positions 25–52 (SESEKKEFPKEMLSSIFAVDNDFKQEER) are excised as a propeptide. Cystine bridges form between cysteine 54–cysteine 67, cysteine 61–cysteine 72, and cysteine 66–cysteine 79.

Belongs to the neurotoxin 10 (Hwtx-1) family. 51 (Hntx-8) subfamily. Hntx-8 sub-subfamily. In terms of tissue distribution, expressed by the venom gland.

The protein resides in the secreted. Functionally, ion channel inhibitor. This is U3-theraphotoxin-Hhn1a 6 from Cyriopagopus hainanus (Chinese bird spider).